Reading from the N-terminus, the 284-residue chain is MYKKIGIIYHPLNPAACDLAIKLAAKLDSLGIENWSDSAWQADKLTPKMQNTQLILTTGGDGTILRTAHAILPLEIPILSVNLGKVGFMTELSPEDAISGLEKVLAGDGWIDERSLLEAEYLPHDSAQSRQFFVMNDAVVARGQVARVICVSVDINSQPFTTYKADGAIVSTATGSTGYSYAAGGPVLQPNSADIILTPILPHLGRGYSLVLPSDSIVDLKVNTWHEATLSIDGFINMQVSSGDTLRLRQSSKKIQFIRLRPENYFYKGLDTKLKGNNESVYDR.

Aspartate 61 (proton acceptor) is an active-site residue. NAD(+) contacts are provided by residues 61-62, arginine 66, 136-137, arginine 147, lysine 164, aspartate 166, and leucine 201; these read DG and ND.

Belongs to the NAD kinase family. Requires a divalent metal cation as cofactor.

Its subcellular location is the cytoplasm. It carries out the reaction NAD(+) + ATP = ADP + NADP(+) + H(+). Functionally, involved in the regulation of the intracellular balance of NAD and NADP, and is a key enzyme in the biosynthesis of NADP. Catalyzes specifically the phosphorylation on 2'-hydroxyl of the adenosine moiety of NAD to yield NADP. In Dehalococcoides mccartyi (strain ATCC BAA-2100 / JCM 16839 / KCTC 5957 / BAV1), this protein is NAD kinase.